The following is a 207-amino-acid chain: Thymidylate kinase (207 aa).

Glycine 7 to serine 14 is a binding site for ATP.

Belongs to the thymidylate kinase family.

It carries out the reaction dTMP + ATP = dTDP + ADP. Phosphorylation of dTMP to form dTDP in both de novo and salvage pathways of dTTP synthesis. This is Thymidylate kinase from Chlamydia caviae (strain ATCC VR-813 / DSM 19441 / 03DC25 / GPIC) (Chlamydophila caviae).